A 448-amino-acid polypeptide reads, in one-letter code: Protease Do-like 8, chloroplastic (448 aa).

The tract at residues 152–333 (EGNGSGVVWD…IPSSTVLKIV (182 aa)) is serine protease. Residues histidine 171, aspartate 214, and serine 292 each act as charge relay system in the active site. Residues 336–433 (LIQFSKVLRA…DKVTLKIKRG (98 aa)) enclose the PDZ domain.

Belongs to the peptidase S1C family.

It is found in the plastid. The protein resides in the chloroplast thylakoid lumen. Functionally, probable serine protease. In Arabidopsis thaliana (Mouse-ear cress), this protein is Protease Do-like 8, chloroplastic (DEGP8).